Consider the following 321-residue polypeptide: tRNA(Ile)-lysidine synthase (321 aa).

30-35 contributes to the ATP binding site; that stretch reads SGGSDS.

The protein belongs to the tRNA(Ile)-lysidine synthase family.

It localises to the cytoplasm. The enzyme catalyses cytidine(34) in tRNA(Ile2) + L-lysine + ATP = lysidine(34) in tRNA(Ile2) + AMP + diphosphate + H(+). Its function is as follows. Ligates lysine onto the cytidine present at position 34 of the AUA codon-specific tRNA(Ile) that contains the anticodon CAU, in an ATP-dependent manner. Cytidine is converted to lysidine, thus changing the amino acid specificity of the tRNA from methionine to isoleucine. The protein is tRNA(Ile)-lysidine synthase of Chlamydia trachomatis serovar D (strain ATCC VR-885 / DSM 19411 / UW-3/Cx).